Consider the following 312-residue polypeptide: MARLSEPSPYVEFDRAQWRALRMSTPLKLTEDELVRLRGIGEKIDLLEVEEVYLPLARLIHLQVAARQALFATTADFLGEPQQNPDRPVPFVIGVAGSVAVGKSTTARVLQALLARWEHHPRVDLVTTDGFLYSNSELSRRNLMHRKGFPESYDRRGLMRFVTTVKSGSDVACAPVYSHLLYDIVPGEKQIIEHPDILILEGLNVLQTGPALMVSDLFDFSVYVDARIEDIENWYISRFLKMREGAFADPASHFHHYSTLTDEQAVFAARDIWHSINRPNLIENILPTRPRATLVLRKDSDHSINRLRLRKL.

Glycine 97 to serine 104 serves as a coordination point for ATP.

This sequence belongs to the prokaryotic pantothenate kinase family.

The protein localises to the cytoplasm. It catalyses the reaction (R)-pantothenate + ATP = (R)-4'-phosphopantothenate + ADP + H(+). Its pathway is cofactor biosynthesis; coenzyme A biosynthesis; CoA from (R)-pantothenate: step 1/5. The chain is Pantothenate kinase from Mycolicibacterium gilvum (strain PYR-GCK) (Mycobacterium gilvum (strain PYR-GCK)).